The following is a 141-amino-acid chain: Metallothiol transferase FosB (141 aa).

Positions 5–120 (SINHLLFSVS…DGHKFEFHTG (116 aa)) constitute a VOC domain. Histidine 8, histidine 67, and glutamate 116 together coordinate Mg(2+). Glutamate 116 serves as the catalytic Proton donor/acceptor.

This sequence belongs to the fosfomycin resistance protein family. FosB subfamily. Homodimer. Mg(2+) serves as cofactor.

It is found in the cytoplasm. Functionally, metallothiol transferase which confers resistance to fosfomycin by catalyzing the addition of a thiol cofactor to fosfomycin. L-cysteine is probably the physiological thiol donor. This chain is Metallothiol transferase FosB, found in Lysinibacillus sphaericus (strain C3-41).